Reading from the N-terminus, the 334-residue chain is MRRAAVLTAGSWGTVFAKVLADAGARVTLFARDRAIADAINGRHVNPRYLADVRLPDLVRATSSPERALRDADLVVLAVPSQALRSCLVEWAPLVGPGAVYVSLMKGMEAGSSRRMSEVIAQAAGVGPERIAVVSGPNLAREIAVEHPAATVVASASAATAHAVQAACWTPYLRPYTNADVLGCELGGAVKNVIALAAGMLEGMGFGTNSLASLITRGLAETARLGTALGADPMTFAGLAGLGDLVATCGSPLSRNRTFGEKLGRGMTLDQVLAEQRQVAEGVRSCRPLLALADGLGVSMPITRQVERVLYEGLPPLEAVKDLMSREPGPEYRL.

NADPH contacts are provided by serine 11, tryptophan 12, arginine 32, and lysine 106. Lysine 106 and glycine 136 together coordinate sn-glycerol 3-phosphate. Alanine 140 serves as a coordination point for NADPH. Sn-glycerol 3-phosphate contacts are provided by lysine 191, aspartate 244, serine 254, arginine 255, and asparagine 256. The active-site Proton acceptor is the lysine 191. Arginine 255 is a binding site for NADPH. NADPH is bound by residues valine 279 and glutamate 281.

The protein belongs to the NAD-dependent glycerol-3-phosphate dehydrogenase family.

It localises to the cytoplasm. The enzyme catalyses sn-glycerol 3-phosphate + NAD(+) = dihydroxyacetone phosphate + NADH + H(+). The catalysed reaction is sn-glycerol 3-phosphate + NADP(+) = dihydroxyacetone phosphate + NADPH + H(+). Its pathway is membrane lipid metabolism; glycerophospholipid metabolism. Its function is as follows. Catalyzes the reduction of the glycolytic intermediate dihydroxyacetone phosphate (DHAP) to sn-glycerol 3-phosphate (G3P), the key precursor for phospholipid synthesis. The protein is Glycerol-3-phosphate dehydrogenase [NAD(P)+] of Parafrankia sp. (strain EAN1pec).